The chain runs to 462 residues: G-patch domain and KOW motifs-containing protein homolog 1 (462 aa).

Disordered stretches follow at residues 1–26 (MVEQ…KREE) and 182–218 (LKLP…EEEK). A G-patch domain is found at 154–202 (IESFGLAILRGCNWKDGDGIGKNPQKVALKLPNRRPPGLGLGATPKNPV). The KOW 1 domain maps to 221-248 (EIKVGSFIKVVDGRNKGVYGKVEGRDDD). Residues 289–305 (EYDKEKDRLETERKKLE) are compositionally biased toward basic and acidic residues. The interval 289 to 337 (EYDKEKDRLETERKKLESQPPSTSTSQSSKDYKSKSSSSKHDKNSSEYE) is disordered. Residues 306-317 (SQPPSTSTSQSS) show a composition bias toward low complexity. The segment covering 318–337 (KDYKSKSSSSKHDKNSSEYE) has biased composition (basic and acidic residues). Positions 401–428 (PREIGEKLMIVAGKRSGQLAVMLDKDKR) constitute a KOW 2 domain.

The protein belongs to the MOS2 family.

It localises to the nucleus. This chain is G-patch domain and KOW motifs-containing protein homolog 1, found in Caenorhabditis elegans.